Consider the following 371-residue polypeptide: Flagellar P-ring protein 1 (371 aa).

The N-terminal stretch at 1–19 (MRRALLLAALLACAPPAFA) is a signal peptide.

Belongs to the FlgI family. The basal body constitutes a major portion of the flagellar organelle and consists of four rings (L,P,S, and M) mounted on a central rod.

It is found in the periplasm. The protein localises to the bacterial flagellum basal body. Functionally, assembles around the rod to form the L-ring and probably protects the motor/basal body from shearing forces during rotation. In Cereibacter sphaeroides (strain ATCC 17023 / DSM 158 / JCM 6121 / CCUG 31486 / LMG 2827 / NBRC 12203 / NCIMB 8253 / ATH 2.4.1.) (Rhodobacter sphaeroides), this protein is Flagellar P-ring protein 1.